Reading from the N-terminus, the 347-residue chain is S-adenosylmethionine:tRNA ribosyltransferase-isomerase (347 aa).

Belongs to the QueA family. In terms of assembly, monomer.

It localises to the cytoplasm. It carries out the reaction 7-aminomethyl-7-carbaguanosine(34) in tRNA + S-adenosyl-L-methionine = epoxyqueuosine(34) in tRNA + adenine + L-methionine + 2 H(+). It participates in tRNA modification; tRNA-queuosine biosynthesis. In terms of biological role, transfers and isomerizes the ribose moiety from AdoMet to the 7-aminomethyl group of 7-deazaguanine (preQ1-tRNA) to give epoxyqueuosine (oQ-tRNA). The polypeptide is S-adenosylmethionine:tRNA ribosyltransferase-isomerase (Bordetella pertussis (strain Tohama I / ATCC BAA-589 / NCTC 13251)).